The sequence spans 718 residues: Nucleolar protein 11 (718 aa).

Lysine 346 carries the N6-methyllysine modification.

In terms of assembly, interacts with UTP4. Interacts with FBL/fibrillarin in a transcription-dependent manner. May associate with the proposed t-UTP subcomplex of the SSU processome containing at least UTP4, WDR43, HEATR1, UTP15, WDR75.

It localises to the nucleus. It is found in the nucleolus. Its function is as follows. Ribosome biogenesis factor. May be required for both optimal rDNA transcription and small subunit (SSU) pre-rRNA processing at sites A', A0, 1 and 2b. This chain is Nucleolar protein 11 (NOL11), found in Pongo abelii (Sumatran orangutan).